Consider the following 366-residue polypeptide: Terpene cyclase-like protein flvF (366 aa).

This sequence belongs to the terpene synthase family. Homodimer.

It carries out the reaction N,N-dimethyl-cadaverine + 2,6,9-trimethyl-13-oxatetracyclo[6.3.1.1(6,9).0(1,5)]tridecane carbocation = pre-flavunoidine + H(+). The protein operates within secondary metabolite biosynthesis; terpenoid biosynthesis. Its function is as follows. Terpene cyclase-like protein; part of the gene cluster that mediates the biosynthesis of flavunoidine, an alkaloidal terpenoid with a tetracyclic cage-like core connected to dimethylcadaverine via a C-N bond and acylated with 5,5-dimethyl-L-pipecolate. The tetracyclic core is synthesized by the terpene cyclase flvE and the cytochrome P450 monooxygenase flvD. The terpene cyclase flvE catalyzes the cyclization of farnesyl pyrophosphate (FPP) to form (1R,4R,5S)-(+)-acoradiene and the cytochrome P450 monooxygenase flvD is then responsible for oxidative conversion of (1R,4R,5S)-(+)-acoradiene into the tetracyclic cage present in the final product flavunoidine. In parallel, the N-methyltransferase flvH dimethylates L-lysine to give N,N-dimethyl-L-Lysin which is decarboxylated by flvG to afford dimethylcadaverine. The terpene cyclase-like protein flvF is the enzyme that attaches the dimethylcadaverine precusor at the C-7 of the tetracyclic cage to yield pre-flavunoidine. The cytochrome monooxygenase flvC hydroxylates the C-10 position of pre-flavunoidine whereas the NRPS flvI acylates the terpenoid core at the hydroxylated C-10 with dimethylpipecolate to yield final flavunoidine. The bifunctional enzyme flvA and the dehydrogenase flvB are responsible for the synthesis of the dimethylpipecolate precursor. The PLP-dependent lyase domain of flvA might use L-O-acetyl-homoserine and alpha-keto-isovalerate to form an intermediary ketone that can cyclize intramolecularly to yield an imine. The imine can be reduced by flvB to yield the 6-carboxylated pipecolate. The C-terminal alpha-KG-dependent oxygenase domain of flvA is then proposed to catalyze the decarboxylation to yield dimethylpipecolate. This chain is Terpene cyclase-like protein flvF, found in Aspergillus flavus (strain ATCC 200026 / FGSC A1120 / IAM 13836 / NRRL 3357 / JCM 12722 / SRRC 167).